A 1297-amino-acid polypeptide reads, in one-letter code: Phosphoribosylformylglycinamidine synthase (1297 aa).

The tract at residues 304-323 (PFPGAATGSGGEIRDEGATG) is disordered. Residues 307 to 318 (GAATGSGGEIRD) and Ala678 contribute to the ATP site. 4 residues coordinate Mg(2+): Asp679, Glu718, Asn722, and Asp886. ATP is bound at residue Ser888. The region spanning 1043–1297 (RIAILREQGV…LFQNARVALG (255 aa)) is the Glutamine amidotransferase type-1 domain. The Nucleophile role is filled by Cys1137. Active-site residues include His1262 and Glu1264.

This sequence in the N-terminal section; belongs to the FGAMS family. In terms of assembly, monomer.

It is found in the cytoplasm. It catalyses the reaction N(2)-formyl-N(1)-(5-phospho-beta-D-ribosyl)glycinamide + L-glutamine + ATP + H2O = 2-formamido-N(1)-(5-O-phospho-beta-D-ribosyl)acetamidine + L-glutamate + ADP + phosphate + H(+). The protein operates within purine metabolism; IMP biosynthesis via de novo pathway; 5-amino-1-(5-phospho-D-ribosyl)imidazole from N(2)-formyl-N(1)-(5-phospho-D-ribosyl)glycinamide: step 1/2. Functionally, phosphoribosylformylglycinamidine synthase involved in the purines biosynthetic pathway. Catalyzes the ATP-dependent conversion of formylglycinamide ribonucleotide (FGAR) and glutamine to yield formylglycinamidine ribonucleotide (FGAM) and glutamate. The chain is Phosphoribosylformylglycinamidine synthase from Histophilus somni (strain 129Pt) (Haemophilus somnus).